The chain runs to 1135 residues: Potassium channel subfamily T member 2 (1135 aa).

Residues 1-63 (MVDLESEVPP…KNQRSSLRIR (63 aa)) lie on the Cytoplasmic side of the membrane. A helical membrane pass occupies residues 64 to 84 (LFNFSLKLLSCLLYIIRVLLE). Over 85–101 (KPSQGSEWSHIFWVNRS) the chain is Extracellular. Residues 102–122 (LPLWGLQVSVALISLFETILL) traverse the membrane as a helical segment. Residues 123-137 (GYLSYKGNIWEQILR) lie on the Cytoplasmic side of the membrane. A helical membrane pass occupies residues 138-158 (IPFILEIINAVPFIISIFWPT). Over 159 to 164 (LRNLFV) the chain is Extracellular. Residues 165–185 (PVFLNCWLAKHALENMINDLH) traverse the membrane as a helical segment. The Cytoplasmic portion of the chain corresponds to 186-198 (RAIQRTQSAMFNQ). The helical transmembrane segment at 199-219 (VLILISTLLCLIFTCICGIQH) threads the bilayer. The Extracellular portion of the chain corresponds to 220–228 (LERIGKKLN). Residues 229 to 249 (LFDSLYFCIVTFSTVGFGDVT) constitute an intramembrane region (pore-forming). Over 250–256 (PETWSSK) the chain is Extracellular. A helical membrane pass occupies residues 257 to 277 (LFVVAMICVALVVLPIQFEQL). Topologically, residues 278-1135 (AYLWMERQKS…VQDSREETQL (858 aa)) are cytoplasmic. RCK N-terminal domains follow at residues 299 to 435 (EKHV…DHVV) and 718 to 858 (NKLI…CYSL). Disordered regions lie at residues 982–1036 (DTKD…AEKI) and 1111–1135 (PNSE…ETQL). Basic residues predominate over residues 1010–1030 (LRRKSMQWARRLSRKGPKHSG). The span at 1111 to 1122 (PNSEPSRKNSIC) shows a compositional bias: polar residues.

Belongs to the potassium channel family. Calcium-activated (TC 1.A.1.3) subfamily. KCa4.2/KCNT2 sub-subfamily. As to quaternary structure, homotetramer. Forms heteromeric channels with KCNT1. These heterodimer channels differ from the homomers in their unitary conductance, kinetic behavior, subcellular localization, and response to activation of protein kinase C. Phosphorylated by protein kinase C. Phosphorylation of the C-terminal domain inhibits channel activity. As to expression, within the dorsal root ganglia (DRGs), exclusively expressed in small-sized and medium-sized calcitonin gene-related peptide (CGRP)-containing DRG neurons.

It is found in the cell membrane. The enzyme catalyses K(+)(in) = K(+)(out). With respect to regulation, are normally in a closed state unless activated by an increase in intracellular Na(+) and Cl(-). Inhibited upon stimulation of G-protein coupled receptors, such as CHRM1 and GRM1. There is conflicting data about the effect of ATP on KNCT2 channels activity. Intracellular ATP was initially report to inhibit the channel activity. However, others studies conclude that KNCT2 channels are not inhibited by intracellular ATP. Functionally, sodium-activated and chloride-activated potassium channel. Produces rapidly activating outward rectifier K(+) currents. Contributes to regulate neuronal excitability. The protein is Potassium channel subfamily T member 2 (Kcnt2) of Mus musculus (Mouse).